The following is a 216-amino-acid chain: Octanoyltransferase (216 aa).

Positions 35-213 (NSNPDFIWIG…IIQEEFNFDF (179 aa)) constitute a BPL/LPL catalytic domain. Substrate is bound by residues 77 to 84 (RGGEVTCH), 144 to 146 (SIG), and 157 to 159 (GFS). Cys-175 functions as the Acyl-thioester intermediate in the catalytic mechanism.

The protein belongs to the LipB family.

The protein localises to the cytoplasm. It catalyses the reaction octanoyl-[ACP] + L-lysyl-[protein] = N(6)-octanoyl-L-lysyl-[protein] + holo-[ACP] + H(+). It participates in protein modification; protein lipoylation via endogenous pathway; protein N(6)-(lipoyl)lysine from octanoyl-[acyl-carrier-protein]: step 1/2. Its function is as follows. Catalyzes the transfer of endogenously produced octanoic acid from octanoyl-acyl-carrier-protein onto the lipoyl domains of lipoate-dependent enzymes. Lipoyl-ACP can also act as a substrate although octanoyl-ACP is likely to be the physiological substrate. This Prochlorococcus marinus (strain MIT 9312) protein is Octanoyltransferase.